Reading from the N-terminus, the 556-residue chain is Potassium-transporting ATPase potassium-binding subunit (556 aa).

10 helical membrane-spanning segments follow: residues 5 to 25, 65 to 85, 133 to 153, 176 to 196, 249 to 269, 283 to 303, 377 to 397, 415 to 435, 483 to 503, and 526 to 546; these read LAGI…HVPL, SVLA…LVQG, GLAV…IALV, IRIL…GGAI, PTTW…FSLP, YAIV…TLFF, AGLY…GLMV, LAAT…AVAM, ALGL…LALA, and FVGM…LPML.

It belongs to the KdpA family. In terms of assembly, the system is composed of three essential subunits: KdpA, KdpB and KdpC.

It is found in the cell membrane. Functionally, part of the high-affinity ATP-driven potassium transport (or Kdp) system, which catalyzes the hydrolysis of ATP coupled with the electrogenic transport of potassium into the cytoplasm. This subunit binds the extracellular potassium ions and delivers the ions to the membrane domain of KdpB through an intramembrane tunnel. This Mycolicibacterium vanbaalenii (strain DSM 7251 / JCM 13017 / BCRC 16820 / KCTC 9966 / NRRL B-24157 / PYR-1) (Mycobacterium vanbaalenii) protein is Potassium-transporting ATPase potassium-binding subunit.